A 334-amino-acid polypeptide reads, in one-letter code: Anthranilate phosphoribosyltransferase (334 aa).

5-phospho-alpha-D-ribose 1-diphosphate is bound by residues G81, 84–85 (GD), T89, 91–94 (NIST), 109–117 (KHGNRSVSS), and A121. An anthranilate-binding site is contributed by G81. Residue S93 coordinates Mg(2+). N112 is an anthranilate binding site. Residue R167 participates in anthranilate binding. 2 residues coordinate Mg(2+): D225 and E226.

This sequence belongs to the anthranilate phosphoribosyltransferase family. As to quaternary structure, homodimer. Requires Mg(2+) as cofactor.

It carries out the reaction N-(5-phospho-beta-D-ribosyl)anthranilate + diphosphate = 5-phospho-alpha-D-ribose 1-diphosphate + anthranilate. The protein operates within amino-acid biosynthesis; L-tryptophan biosynthesis; L-tryptophan from chorismate: step 2/5. Functionally, catalyzes the transfer of the phosphoribosyl group of 5-phosphorylribose-1-pyrophosphate (PRPP) to anthranilate to yield N-(5'-phosphoribosyl)-anthranilate (PRA). In Histophilus somni (strain 2336) (Haemophilus somnus), this protein is Anthranilate phosphoribosyltransferase.